The primary structure comprises 325 residues: Elongation factor Ts, mitochondrial (325 aa).

Residues 1–45 constitute a mitochondrion transit peptide; sequence MSLLRSLRVFLVARTGSYPAGSLLRQSPQPRHTFYAGPRLSASAS. Residues Lys76, Lys133, and Lys192 each carry the N6-succinyllysine modification. Ser270 is subject to Phosphoserine. A Phosphothreonine modification is found at Thr324.

The protein belongs to the EF-Ts family. As to expression, expressed in all tissues, with the highest levels of expression in skeletal muscle, liver and kidney.

The protein localises to the mitochondrion. Functionally, associates with the EF-Tu.GDP complex and induces the exchange of GDP to GTP. It remains bound to the aminoacyl-tRNA.EF-Tu.GTP complex up to the GTP hydrolysis stage on the ribosome. This is Elongation factor Ts, mitochondrial from Homo sapiens (Human).